A 128-amino-acid polypeptide reads, in one-letter code: Probable 4-amino-4-deoxy-L-arabinose-phosphoundecaprenol flippase subunit ArnF (128 aa).

Over 1-2 (MG) the chain is Cytoplasmic. The chain crosses the membrane as a helical span at residues 3–23 (LMWGLFSVIIASAAQLSLGFA). Over 24 to 32 (ASHLPPMTH) the chain is Periplasmic. The chain crosses the membrane as a helical span at residues 33 to 53 (LWDFIAALLAFGLDARILLLG). The Cytoplasmic segment spans residues 54-76 (LQGYLLSVFCWYKTLHKLALSKA). Residues 77–97 (YALLSMSYVLVWIASMVLPGW) form a helical membrane-spanning segment. Over 98 to 100 (EGT) the chain is Periplasmic. Residues 101–121 (FSLKALLGVACIMSGLMLIFL) form a helical membrane-spanning segment. The Cytoplasmic portion of the chain corresponds to 122-128 (PTTKQRY).

This sequence belongs to the ArnF family. Heterodimer of ArnE and ArnF.

It is found in the cell inner membrane. The protein operates within bacterial outer membrane biogenesis; lipopolysaccharide biosynthesis. Its function is as follows. Translocates 4-amino-4-deoxy-L-arabinose-phosphoundecaprenol (alpha-L-Ara4N-phosphoundecaprenol) from the cytoplasmic to the periplasmic side of the inner membrane. This chain is Probable 4-amino-4-deoxy-L-arabinose-phosphoundecaprenol flippase subunit ArnF, found in Escherichia coli O7:K1 (strain IAI39 / ExPEC).